The following is a 453-amino-acid chain: UPF0210 protein MM_0081 (453 aa).

The protein belongs to the UPF0210 family.

This is UPF0210 protein MM_0081 from Methanosarcina mazei (strain ATCC BAA-159 / DSM 3647 / Goe1 / Go1 / JCM 11833 / OCM 88) (Methanosarcina frisia).